We begin with the raw amino-acid sequence, 937 residues long: Isoleucine--tRNA ligase (937 aa).

A 'HIGH' region motif is present at residues 57 to 67 (PYANGPIHMGH). Glu-556 serves as a coordination point for L-isoleucyl-5'-AMP. A 'KMSKS' region motif is present at residues 597 to 601 (KMSKS). Lys-600 contacts ATP. Zn(2+)-binding residues include Cys-895, Cys-898, Cys-915, and Cys-918.

It belongs to the class-I aminoacyl-tRNA synthetase family. IleS type 1 subfamily. Monomer. Requires Zn(2+) as cofactor.

The protein resides in the cytoplasm. The enzyme catalyses tRNA(Ile) + L-isoleucine + ATP = L-isoleucyl-tRNA(Ile) + AMP + diphosphate. Its function is as follows. Catalyzes the attachment of isoleucine to tRNA(Ile). As IleRS can inadvertently accommodate and process structurally similar amino acids such as valine, to avoid such errors it has two additional distinct tRNA(Ile)-dependent editing activities. One activity is designated as 'pretransfer' editing and involves the hydrolysis of activated Val-AMP. The other activity is designated 'posttransfer' editing and involves deacylation of mischarged Val-tRNA(Ile). The polypeptide is Isoleucine--tRNA ligase (Levilactobacillus brevis (strain ATCC 367 / BCRC 12310 / CIP 105137 / JCM 1170 / LMG 11437 / NCIMB 947 / NCTC 947) (Lactobacillus brevis)).